The chain runs to 906 residues: Nuclear factor NF-kappa-B p100 subunit (906 aa).

Positions 34–223 (AVGPYLVIIE…DPIHDSKSPG (190 aa)) constitute an RHD domain. A Nuclear localization signal motif is present at residues 336 to 340 (RNRKK). Positions 345–374 (FPQHFGGGSHMGGAGGAGGFGAGGGGNLSF) are GRR. 6 ANK repeats span residues 472–501 (NGDT…SIPS), 511–540 (LQQT…NPTL), 544–573 (YGNS…SATP), 582–611 (QGLL…DVNG), 616–646 (GGRT…NVNS), and 650–679 (AGNT…DVQR). Disordered regions lie at residues 677–734 (VQRE…GPRQ) and 857–906 (EPLE…QQVH). The segment covering 684–695 (PVSPSSVRVPSS) has biased composition (low complexity). Residues 697–708 (TDGDPEEQEQEQ) show a composition bias toward acidic residues. Residues 771–857 (RNHLLSLDTD…GAVRMLRKPE (87 aa)) form the Death domain.

Component of the NF-kappa-B RelB-p52 complex. While translation occurs, the particular unfolded structure after the GRR repeat promotes the generation of p52 making it an acceptable substrate for the proteasome. This process is known as cotranslational processing. The processed form is active and the unprocessed form acts as an inhibitor (I kappa B-like), being able to form cytosolic complexes with NF-kappa B, trapping it in the cytoplasm. Complete folding of the region downstream of the GRR repeat precludes processing. In terms of processing, constitutive processing is tightly suppressed by its C-terminal processing inhibitory domain, named PID, which contains the death domain.

The protein resides in the nucleus. Its subcellular location is the cytoplasm. Functionally, NF-kappa-B is a pleiotropic transcription factor present in almost all cell types and is the endpoint of a series of signal transduction events that are initiated by a vast array of stimuli related to many biological processes such as inflammation, immunity, differentiation, cell growth, tumorigenesis and apoptosis. NF-kappa-B is a homo- or heterodimeric complex formed by the Rel-like domain-containing proteins RELA/p65, RELB, NFKB1/p105, NFKB1/p50, REL and NFKB2/p52. The dimers bind at kappa-B sites in the DNA of their target genes and the individual dimers have distinct preferences for different kappa-B sites that they can bind with distinguishable affinity and specificity. Different dimer combinations act as transcriptional activators or repressors, respectively. NF-kappa-B is controlled by various mechanisms of post-translational modification and subcellular compartmentalization as well as by interactions with other cofactors or corepressors. NF-kappa-B complexes are held in the cytoplasm in an inactive state complexed with members of the NF-kappa-B inhibitor (I-kappa-B) family. In a conventional activation pathway, I-kappa-B is phosphorylated by I-kappa-B kinases (IKKs) in response to different activators, subsequently degraded thus liberating the active NF-kappa-B complex which translocates to the nucleus. In a non-canonical activation pathway, the MAP3K14-activated CHUK/IKKA homodimer phosphorylates NFKB2/p100 associated with RelB, inducing its proteolytic processing to NFKB2/p52 and the formation of NF-kappa-B RelB-p52 complexes. The NF-kappa-B heterodimeric RelB-p52 complex is a transcriptional activator. NFKB2 appears to have dual functions such as cytoplasmic retention of attached NF-kappa-B proteins by p100 and generation of p52 by a cotranslational processing. The proteasome-mediated process ensures the production of both p52 and p100 and preserves their independent function. p52 binds to the kappa-B consensus sequence 5'-GGRNNYYCC-3', located in the enhancer region of genes involved in immune response and acute phase reactions. In concert with RELB, may play a role in the regulation of the circadian clock. The polypeptide is Nuclear factor NF-kappa-B p100 subunit (NFKB2) (Gallus gallus (Chicken)).